We begin with the raw amino-acid sequence, 348 residues long: Dihydroorotate dehydrogenase (quinone) (348 aa).

Residues 60-64 and T84 contribute to the FMN site; that span reads AGFDK. Substrate is bound at residue K64. 109-113 provides a ligand contact to substrate; it reads NRLGF. The FMN site is built by N138 and N169. N169 serves as a coordination point for substrate. The active-site Nucleophile is S172. Residue N174 coordinates substrate. Residues K207 and S235 each contribute to the FMN site. 236-237 is a substrate binding site; that stretch reads NT. Residues G258, G287, and 308-309 contribute to the FMN site; that span reads YS.

The protein belongs to the dihydroorotate dehydrogenase family. Type 2 subfamily. In terms of assembly, monomer. FMN serves as cofactor.

The protein resides in the cell membrane. The enzyme catalyses (S)-dihydroorotate + a quinone = orotate + a quinol. The protein operates within pyrimidine metabolism; UMP biosynthesis via de novo pathway; orotate from (S)-dihydroorotate (quinone route): step 1/1. In terms of biological role, catalyzes the conversion of dihydroorotate to orotate with quinone as electron acceptor. This Parvibaculum lavamentivorans (strain DS-1 / DSM 13023 / NCIMB 13966) protein is Dihydroorotate dehydrogenase (quinone).